We begin with the raw amino-acid sequence, 111 residues long: Large ribosomal subunit protein uL22 (111 aa).

It belongs to the universal ribosomal protein uL22 family. Part of the 50S ribosomal subunit.

This protein binds specifically to 23S rRNA; its binding is stimulated by other ribosomal proteins, e.g. L4, L17, and L20. It is important during the early stages of 50S assembly. It makes multiple contacts with different domains of the 23S rRNA in the assembled 50S subunit and ribosome. Functionally, the globular domain of the protein is located near the polypeptide exit tunnel on the outside of the subunit, while an extended beta-hairpin is found that lines the wall of the exit tunnel in the center of the 70S ribosome. The chain is Large ribosomal subunit protein uL22 from Clostridium beijerinckii (strain ATCC 51743 / NCIMB 8052) (Clostridium acetobutylicum).